A 396-amino-acid chain; its full sequence is UPF0046 protein T07D4.2 (396 aa).

The interval 73 to 94 (SRRGSIASGIPMDKKTRRKLSN) is disordered.

Belongs to the UPF0046 family.

In Caenorhabditis elegans, this protein is UPF0046 protein T07D4.2.